Consider the following 96-residue polypeptide: MRDPRDIIKRPVITERSMEMMAEKKYTFDVDVKANKTEVKDAVEAIFGVEVEKVNIMNYKPKAKRVGRHAGFTNRRRKAIVKLTADSKEIEIFQGV.

The protein belongs to the universal ribosomal protein uL23 family. In terms of assembly, part of the 50S ribosomal subunit. Contacts protein L29, and trigger factor when it is bound to the ribosome.

Its function is as follows. One of the early assembly proteins it binds 23S rRNA. One of the proteins that surrounds the polypeptide exit tunnel on the outside of the ribosome. Forms the main docking site for trigger factor binding to the ribosome. This Bacillus cytotoxicus (strain DSM 22905 / CIP 110041 / 391-98 / NVH 391-98) protein is Large ribosomal subunit protein uL23.